Reading from the N-terminus, the 369-residue chain is Glycolate oxidase 1 (369 aa).

In terms of domain architecture, FMN hydroxy acid dehydrogenase spans 1 to 360 (MGEITNVMEY…TRKHIITESD (360 aa)). Y25 serves as a coordination point for glyoxylate. Residues 78–80 (PTA), S107, 128–130 (QLY), and T156 contribute to the FMN site. Y130 lines the glyoxylate pocket. R165 provides a ligand contact to glyoxylate. The FMN site is built by K231 and S253. Residues H255 and R258 each coordinate glyoxylate. Catalysis depends on H255, which acts as the Proton acceptor. FMN-binding positions include 286–290 (DGGVR) and 309–310 (GR).

Belongs to the FMN-dependent alpha-hydroxy acid dehydrogenase family. As to quaternary structure, homotetramer. FMN serves as cofactor.

The protein resides in the peroxisome. The enzyme catalyses glycolate + O2 = glyoxylate + H2O2. The protein operates within photosynthesis; photorespiration; glycine from 2-phosphoglycolate: step 2/3. Its function is as follows. Catalyzes the oxidation of glycolate to glyoxylate, with a reduction of O2 to H2O2. Is an essential enzyme in photorespiration in plants. Photorespiration plays a vital role in C4 photosynthesis in Z.mays and is essential for maize seedling development and maintaining low (non-toxic) levels of glycolate. The protein is Glycolate oxidase 1 of Zea mays (Maize).